The sequence spans 431 residues: MKNWRTLILGLALSASTAFAAPQVVDKVAAVVDNSVVLESDVNSLLQSVKLNAQQAGQQLPDDATLRHQITDRLIMDNIILQMAQKMGIQVTDEQLDQAITNIAAQNRMSIDQLKSQLANEGLNYNTYRSQIRKEMLISEVRNNEVRRRVTVLPQEVDTLAKQIANQTGENDELNLSHILLPLPENPTQQQVDEAENLATSLVKQISEGADFGKLAITYSSDSQALKGGQMGWGKLQEIPTLFAERLTQVQKGQVVGPIRSGVGFHILKVNDIRGGNKSVSVTETHARHILIKPSVVMTDSQAQAKLADVAQQIKNGSTDFAAQAKLLSQDPGSANQGGDLGWASPDMYDPAFRDALLKLKKGEISQPIHSSFGWHLIQLLDTRQVDKTDAAQKEQAYRMIFNRKFAEEAQTWMQEQRAAAYVKVINGATN.

The signal sequence occupies residues 1 to 20 (MKNWRTLILGLALSASTAFA). 2 consecutive PpiC domains span residues 171-272 (NDEL…KVND) and 282-382 (VTET…QLLD).

Its subcellular location is the periplasm. It carries out the reaction [protein]-peptidylproline (omega=180) = [protein]-peptidylproline (omega=0). Functionally, chaperone involved in the correct folding and assembly of outer membrane proteins. Recognizes specific patterns of aromatic residues and the orientation of their side chains, which are found more frequently in integral outer membrane proteins. May act in both early periplasmic and late outer membrane-associated steps of protein maturation. The polypeptide is Chaperone SurA (Pectobacterium atrosepticum (strain SCRI 1043 / ATCC BAA-672) (Erwinia carotovora subsp. atroseptica)).